The sequence spans 627 residues: Membrane protein insertase YidC (627 aa).

A helical membrane pass occupies residues 8–28 (LFLALILSMGIWMGVNYFFFP). A compositionally biased stretch (polar residues) spans 33–57 (KKNTETKQTQSDKTSENTKQQITSG). The tract at residues 33 to 68 (KKNTETKQTQSDKTSENTKQQITSGKTKESNSADPV) is disordered. The segment covering 58 to 68 (KTKESNSADPV) has biased composition (basic and acidic residues). The next 4 membrane-spanning stretches (helical) occupy residues 417-437 (FTIP…KLVF), 488-508 (VGGC…YTAF), 536-556 (AIPY…LMVG), and 575-595 (MLMY…PSGV).

It belongs to the OXA1/ALB3/YidC family. Type 1 subfamily. As to quaternary structure, interacts with the Sec translocase complex via SecD. Specifically interacts with transmembrane segments of nascent integral membrane proteins during membrane integration.

The protein resides in the cell inner membrane. Functionally, required for the insertion and/or proper folding and/or complex formation of integral membrane proteins into the membrane. Involved in integration of membrane proteins that insert both dependently and independently of the Sec translocase complex, as well as at least some lipoproteins. Aids folding of multispanning membrane proteins. The chain is Membrane protein insertase YidC from Leptospira interrogans serogroup Icterohaemorrhagiae serovar Lai (strain 56601).